The primary structure comprises 202 residues: Glycerol-3-phosphate acyltransferase (202 aa).

The next 6 helical transmembrane spans lie at 2–22 (MIVL…GVII), 54–74 (FVVT…PLLF), 85–105 (FFTN…YPIF), 118–138 (AGVV…IFFL), 140–160 (LYLT…CVIG), and 162–182 (LIIH…LLIF).

Belongs to the PlsY family. As to quaternary structure, probably interacts with PlsX.

The protein resides in the cell membrane. The catalysed reaction is an acyl phosphate + sn-glycerol 3-phosphate = a 1-acyl-sn-glycero-3-phosphate + phosphate. The protein operates within lipid metabolism; phospholipid metabolism. Catalyzes the transfer of an acyl group from acyl-phosphate (acyl-PO(4)) to glycerol-3-phosphate (G3P) to form lysophosphatidic acid (LPA). This enzyme utilizes acyl-phosphate as fatty acyl donor, but not acyl-CoA or acyl-ACP. The protein is Glycerol-3-phosphate acyltransferase of Staphylococcus carnosus (strain TM300).